We begin with the raw amino-acid sequence, 187 residues long: Elongation factor P 1 (187 aa).

Belongs to the elongation factor P family.

The protein resides in the cytoplasm. It participates in protein biosynthesis; polypeptide chain elongation. Functionally, involved in peptide bond synthesis. Stimulates efficient translation and peptide-bond synthesis on native or reconstituted 70S ribosomes in vitro. Probably functions indirectly by altering the affinity of the ribosome for aminoacyl-tRNA, thus increasing their reactivity as acceptors for peptidyl transferase. This Geobacter sulfurreducens (strain ATCC 51573 / DSM 12127 / PCA) protein is Elongation factor P 1.